The following is a 336-amino-acid chain: Ketol-acid reductoisomerase (NADP(+)) 1 (336 aa).

The region spanning 2 to 181 is the KARI N-terminal Rossmann domain; sequence AKVYYEKDVT…GATRAGVLET (180 aa). Residues 25–28, arginine 48, serine 52, and 82–85 each bind NADP(+); these read YGSQ and DELQ. Histidine 107 is an active-site residue. Position 133 (glycine 133) interacts with NADP(+). Positions 182–327 constitute a KARI C-terminal knotted domain; sequence TFKEETETDL…RKLREMMPFV (146 aa). 4 residues coordinate Mg(2+): aspartate 190, glutamate 194, glutamate 226, and glutamate 230. Substrate is bound at residue serine 251.

It belongs to the ketol-acid reductoisomerase family. The cofactor is Mg(2+).

It carries out the reaction (2R)-2,3-dihydroxy-3-methylbutanoate + NADP(+) = (2S)-2-acetolactate + NADPH + H(+). The enzyme catalyses (2R,3R)-2,3-dihydroxy-3-methylpentanoate + NADP(+) = (S)-2-ethyl-2-hydroxy-3-oxobutanoate + NADPH + H(+). Its pathway is amino-acid biosynthesis; L-isoleucine biosynthesis; L-isoleucine from 2-oxobutanoate: step 2/4. It functions in the pathway amino-acid biosynthesis; L-valine biosynthesis; L-valine from pyruvate: step 2/4. Involved in the biosynthesis of branched-chain amino acids (BCAA). Catalyzes an alkyl-migration followed by a ketol-acid reduction of (S)-2-acetolactate (S2AL) to yield (R)-2,3-dihydroxy-isovalerate. In the isomerase reaction, S2AL is rearranged via a Mg-dependent methyl migration to produce 3-hydroxy-3-methyl-2-ketobutyrate (HMKB). In the reductase reaction, this 2-ketoacid undergoes a metal-dependent reduction by NADPH to yield (R)-2,3-dihydroxy-isovalerate. This chain is Ketol-acid reductoisomerase (NADP(+)) 1, found in Bacillus thuringiensis subsp. konkukian (strain 97-27).